Consider the following 159-residue polypeptide: U-actitoxin-Avd13b (159 aa).

The signal sequence occupies residues 1-18 (MKSIFLVFFAVCLVKAEA). Positions 19–26 (GKGRKREP) are excised as a propeptide. 2 cysteine pairs are disulfide-bonded: Cys-33/Cys-45 and Cys-36/Cys-52. Positions 59–60 (EP) are excised as a propeptide. 2 cysteine pairs are disulfide-bonded: Cys-67–Cys-79 and Cys-70–Cys-86. Positions 93 to 94 (EP) are excised as a propeptide. 2 disulfides stabilise this stretch: Cys-101–Cys-113 and Cys-104–Cys-120. The propeptide occupies 127 to 128 (EP). Disulfide bonds link Cys-135/Cys-147 and Cys-138/Cys-154.

Belongs to the sea anemone BBH family.

The protein resides in the secreted. It is found in the nematocyst. Its function is as follows. Inhibits ion channels. This chain is U-actitoxin-Avd13b, found in Anemonia viridis (Snakelocks anemone).